The sequence spans 1854 residues: Protein virilizer (1854 aa).

The residue at position 186 (Ser-186) is a Phosphoserine. Basic and acidic residues-rich tracts occupy residues 202–214 (YHQH…QREM) and 236–259 (THSE…DWSR). Disordered regions lie at residues 202–361 (YHQH…EIIG), 777–821 (NPEE…GKPV), 1570–1589 (TSTE…ASSC), 1720–1788 (VRGR…NRGS), and 1804–1854 (IGSP…SYLR). Phosphoserine occurs at positions 258, 260, and 276. Positions 275–285 (RSRSVVDEHKW) are enriched in basic and acidic residues. A Phosphothreonine modification is found at Thr-288. Position 295 is a phosphoserine (Ser-295). A Phosphothreonine modification is found at Thr-297. 2 positions are modified to phosphoserine: Ser-301 and Ser-312. 2 stretches are compositionally biased toward basic and acidic residues: residues 325 to 343 (HSSE…EDRS) and 777 to 796 (NPEE…KAME). The stretch at 779–808 (EEKEEKAEKSDAEDKAMEVENEAVEAGGEK) forms a coiled coil. Low complexity-rich tracts occupy residues 1738–1748 (SRPPNTSRPPS) and 1816–1838 (SYRS…PHYS).

Belongs to the vir family. Component of the WMM complex, a N6-methyltransferase complex composed of a catalytic subcomplex, named MAC, and of an associated subcomplex, named MACOM. The MAC subcomplex is composed of Ime4/Mettl3 and Mettl14. The MACOM subcomplex is composed of fl(2)d, Flacc/Xio, Hakai, vir, and, in some cases of nito. Part of a complex containing fl(2)d, Sxl and vir.

Its subcellular location is the nucleus. Associated component of the WMM complex, a complex that mediates N6-methyladenosine (m6A) methylation of mRNAs, a modification that plays a role in the efficiency of mRNA splicing and is required for sex determination. Required for sex determination and dosage compensation via Sxl alternative splicing: m6A methylation acts as a key regulator of Sxl pre-mRNA and promotes female-specific alternative splicing of Sxl, which determines female physiognomy. M6A methylation is also required for neuronal functions. Required for proper inclusion of regulated exons in Ubx transcripts, leading to isoforms Ia/b and IIa/b. This Drosophila melanogaster (Fruit fly) protein is Protein virilizer.